Consider the following 266-residue polypeptide: Streptomycin 3''-kinase (266 aa).

Asp-154 functions as the Proton acceptor in the catalytic mechanism.

It belongs to the aminoglycoside phosphotransferase family.

It catalyses the reaction streptomycin + ATP = streptomycin 3''-phosphate + ADP + H(+). In terms of biological role, the aminoglycoside phosphotransferases achieve inactivation of their antibiotic substrates by phosphorylation. The sequence is that of Streptomycin 3''-kinase (str) from Klebsiella pneumoniae.